The primary structure comprises 154 residues: Myoglobin (154 aa).

Positions 2-148 (GLSDQEWQHV…FRNDMASKYK (147 aa)) constitute a Globin domain. His-65 provides a ligand contact to nitrite. Residue His-65 participates in O2 binding. His-94 is a binding site for heme b.

As to quaternary structure, monomeric.

It is found in the cytoplasm. Its subcellular location is the sarcoplasm. It catalyses the reaction Fe(III)-heme b-[protein] + nitric oxide + H2O = Fe(II)-heme b-[protein] + nitrite + 2 H(+). The enzyme catalyses H2O2 + AH2 = A + 2 H2O. In terms of biological role, monomeric heme protein which primary function is to store oxygen and facilitate its diffusion within muscle tissues. Reversibly binds oxygen through a pentacoordinated heme iron and enables its timely and efficient release as needed during periods of heightened demand. Depending on the oxidative conditions of tissues and cells, and in addition to its ability to bind oxygen, it also has a nitrite reductase activity whereby it regulates the production of bioactive nitric oxide. Under stress conditions, like hypoxia and anoxia, it also protects cells against reactive oxygen species thanks to its pseudoperoxidase activity. The protein is Myoglobin of Dromaius novaehollandiae (Emu).